The sequence spans 239 residues: Ribosomal RNA small subunit methyltransferase G (239 aa).

S-adenosyl-L-methionine contacts are provided by residues G77, F82, 128-129 (AE), and R146. A disordered region spans residues 215-239 (DKRSQTPKKYPRKPGTPNKSPLLEK).

This sequence belongs to the methyltransferase superfamily. RNA methyltransferase RsmG family.

The protein resides in the cytoplasm. Its function is as follows. Specifically methylates the N7 position of guanine in position 535 of 16S rRNA. This chain is Ribosomal RNA small subunit methyltransferase G, found in Staphylococcus saprophyticus subsp. saprophyticus (strain ATCC 15305 / DSM 20229 / NCIMB 8711 / NCTC 7292 / S-41).